Consider the following 32-residue polypeptide: Cytochrome b6-f complex subunit 6 (32 aa).

The chain crosses the membrane as a helical span at residues 4–26 (ITSYVGLLFTALGFTLGLYFGLT).

It belongs to the PetL family. In terms of assembly, the 4 large subunits of the cytochrome b6-f complex are cytochrome b6, subunit IV (17 kDa polypeptide, PetD), cytochrome f and the Rieske protein, while the 4 small subunits are PetG, PetL, PetM and PetN. The complex functions as a dimer.

It is found in the plastid. The protein resides in the chloroplast thylakoid membrane. Its function is as follows. Component of the cytochrome b6-f complex, which mediates electron transfer between photosystem II (PSII) and photosystem I (PSI), cyclic electron flow around PSI, and state transitions. PetL is important for photoautotrophic growth as well as for electron transfer efficiency and stability of the cytochrome b6-f complex. The sequence is that of Cytochrome b6-f complex subunit 6 from Tetradesmus obliquus (Green alga).